An 88-amino-acid polypeptide reads, in one-letter code: Small ribosomal subunit protein uS17 (88 aa).

The protein belongs to the universal ribosomal protein uS17 family. As to quaternary structure, part of the 30S ribosomal subunit.

Functionally, one of the primary rRNA binding proteins, it binds specifically to the 5'-end of 16S ribosomal RNA. This chain is Small ribosomal subunit protein uS17, found in Xylella fastidiosa (strain M23).